The primary structure comprises 204 residues: MDYEIENNHADSIRRGSIEVICGSMFSGKTEELLRRLRRAKIARQTVEIFKPTIDIRYDETDVVSHDKNAIASAPVDNSANILLLSSQVDVVGIDEAQFFDEGLVEVAQQLADQGVRVVIAGLDMDFRRQPFGPMPGLCAIADSVTKVHAVCVECGRLASYSFRRVQGDQQVMLGELNEYSPLCRTCYRKCSSPPQTEEIHSTI.

ATP-binding positions include 23–30 (GSMFSGKT) and 95–98 (DEAQ). E96 acts as the Proton acceptor in catalysis. Zn(2+) contacts are provided by C152, C155, C184, and C187.

This sequence belongs to the thymidine kinase family. In terms of assembly, homotetramer.

Its subcellular location is the cytoplasm. The catalysed reaction is thymidine + ATP = dTMP + ADP + H(+). This chain is Thymidine kinase, found in Porphyromonas gingivalis (strain ATCC 33277 / DSM 20709 / CIP 103683 / JCM 12257 / NCTC 11834 / 2561).